Here is a 373-residue protein sequence, read N- to C-terminus: Transaldolase (373 aa).

The Schiff-base intermediate with substrate role is filled by Lys143.

It belongs to the transaldolase family. Type 2 subfamily.

It is found in the cytoplasm. The catalysed reaction is D-sedoheptulose 7-phosphate + D-glyceraldehyde 3-phosphate = D-erythrose 4-phosphate + beta-D-fructose 6-phosphate. The protein operates within carbohydrate degradation; pentose phosphate pathway; D-glyceraldehyde 3-phosphate and beta-D-fructose 6-phosphate from D-ribose 5-phosphate and D-xylulose 5-phosphate (non-oxidative stage): step 2/3. Transaldolase is important for the balance of metabolites in the pentose-phosphate pathway. This chain is Transaldolase, found in Mycobacterium marinum (strain ATCC BAA-535 / M).